A 966-amino-acid polypeptide reads, in one-letter code: MVFAVGQRWISESENNLGLGIITEVNSRAVTIFFPAADETRIYATASAPLTRVVFNAGDMITHQQGWQAQVTDIMVNNLTALYLVRRTDNGEEIVLKEIDLAHQINFSQPQDRLFTAQIDRSDRFALRYHALRHQQAQFKSPLRGLRGIRAGLIPHQLHIAKEVGQRLHPRVLLADEVGLGKTIEAGMILQQQIFAGRADRVLIVVPESLQHQWLVEMLRRFNLHFSLFDEERAEDFAATDEQEECNPFDSENLIICSLDWLISRPKRRTQALQTQFDLLIVDEAHHLTWSPEAANPEYQLVESLTKQIPSVLLLTATPEQLGQESHFARLKLLDADRFYDYDAFVAEQRHYRPVADAVQTLLAENPLSAAEKNAISDLLEEQDLEPLFKALDSRNEEEKATVRQELIDSLIDRHGTSRVLFRNTRQGVKGFPRRIYRQINLPLPKQYINAVRVVGRLGKNPEDELFYPERLFQNMDQNAKWWDFDPRVEWLITFLKNHRAEKVLVICRQAQTAVQLEQALRAKEGIRCAVFHERLSIIERDRAAAYFADQENGAQVLLSSAIGSEGRNFQFACRLVLFNLPENPDLLEQCIGRLDRIGQRRDIRIYVPCFADSPQAVLADWFHQGLNAFEEICPMGMALFEKCGQNLQYFLQNPTESAGFEMFLKKTAELRLQLKAELENGRDRLLELNSNGGEAAQRLAEAIRVEDNDTELVNFTLNLFDIIGVEQEDSGEKSIVITPTGTMLVPDFPGLKEEGVTVTFDRELALAREELEFLTWDHPMLRNGIDLVVSGDIGKTAASLLVNNKLPTGTLLLELIYVVESQSPKGLQLNRFLPPTPIRLLLDGKGQDLAAQVGFNRLEKQLKPMAKNMASKMVKMVRPNIEKMLSMAEQLMRERAKTLIGDAQQQADFVLSHELNRLNGLKRVNKNIRQDEIDGLEKIRIRSLSELAKASWRLDCLRVIVSNRA.

The Helicase ATP-binding domain occupies 163–337; that stretch reads EVGQRLHPRV…FARLKLLDAD (175 aa). An ATP-binding site is contributed by 176 to 183; the sequence is DEVGLGKT. The DEAH box signature appears at 283 to 286; it reads DEAH. In terms of domain architecture, Helicase C-terminal spans 488–642; sequence RVEWLITFLK…ICPMGMALFE (155 aa).

Belongs to the SNF2/RAD54 helicase family. RapA subfamily. As to quaternary structure, interacts with the RNAP. Has a higher affinity for the core RNAP than for the holoenzyme. Its ATPase activity is stimulated by binding to RNAP.

In terms of biological role, transcription regulator that activates transcription by stimulating RNA polymerase (RNAP) recycling in case of stress conditions such as supercoiled DNA or high salt concentrations. Probably acts by releasing the RNAP, when it is trapped or immobilized on tightly supercoiled DNA. Does not activate transcription on linear DNA. Probably not involved in DNA repair. The polypeptide is RNA polymerase-associated protein RapA (Actinobacillus succinogenes (strain ATCC 55618 / DSM 22257 / CCUG 43843 / 130Z)).